The following is a 497-amino-acid chain: POU domain, class 3, transcription factor 3 (497 aa).

Positions Gly31 to Gln51 are enriched in gly residues. Disordered stretches follow at residues Gly31–Tyr62, Trp121–Ala189, Asn230–Ser316, and Glu458–Gln497. Pro residues-rich tracts occupy residues Gln133–Gly145 and His170–Gln180. Gly residues predominate over residues Gly240–Ala250. Positions His269–His286 are enriched in basic residues. A POU-specific domain is found at Glu311–Asp385. The segment at residues Lys403–Thr462 is a DNA-binding region (homeobox). A compositionally biased stretch (polar residues) spans Gly465 to Ala483.

Belongs to the POU transcription factor family. Class-3 subfamily. As to quaternary structure, homodimer. As to expression, brain.

The protein localises to the nucleus. Its function is as follows. Transcription factor that acts synergistically with SOX11 and SOX4. Plays a role in neuronal development. Is implicated in an enhancer activity at the embryonic met-mesencephalic junction; the enhancer element contains the octamer motif (5'-ATTTGCAT-3'). In Rattus norvegicus (Rat), this protein is POU domain, class 3, transcription factor 3 (Pou3f3).